The sequence spans 283 residues: MGEYIVTKTLNNNVVVCTNNDQEVILIGKGIGFNKKEGMTLNDQTITIEKIYKLESEQQKAHYKSLVEIADDNVLQVIIDSLNFISNTAMNVDSKQLVVSLTDHIIFAYKRLKQNQVISNPFVMETMQLYSDAYHIAKQVIDQLNAALDVHFPEDEIGFIALHIASNTEDLSMHEMTLINNVIKKGIDIIESDLVTTVDKESLQYQRFIRHVQFLIRRLRRKEYIHAQDDFVSMIKNHYPICYNTAYKILTMIQKQFDVNISESEIIYLTLHIHHFEERINQS.

2 consecutive PRD domains span residues 69–173 and 174–283; these read IADD…DLSM and HEMT…INQS.

Belongs to the transcriptional antiterminator BglG family. GlcT subfamily.

This is Protein GlcT (glcT) from Staphylococcus aureus (strain MRSA252).